Reading from the N-terminus, the 101-residue chain is RNA-binding protein Hfq (101 aa).

Residues 9-68 (DPYLNALRRERIPVSIYLVNGIKLQGQIESFDQFIILLKNTVSQMVYKHAISTVVPARSI) enclose the Sm domain. Positions 68-91 (ISHNNNGSSQAQAPQQAVQTTQPV) are disordered. The segment covering 77–91 (QAQAPQQAVQTTQPV) has biased composition (low complexity).

This sequence belongs to the Hfq family. In terms of assembly, homohexamer.

RNA chaperone that binds small regulatory RNA (sRNAs) and mRNAs to facilitate mRNA translational regulation in response to envelope stress, environmental stress and changes in metabolite concentrations. Also binds with high specificity to tRNAs. The protein is RNA-binding protein Hfq of Haemophilus ducreyi (strain 35000HP / ATCC 700724).